Reading from the N-terminus, the 87-residue chain is Small ribosomal subunit protein bS20 (87 aa).

The tract at residues 1 to 22 (MANSAQARKRARQSVKQRAHNA) is disordered. Basic residues predominate over residues 7 to 19 (ARKRARQSVKQRA).

This sequence belongs to the bacterial ribosomal protein bS20 family.

Its function is as follows. Binds directly to 16S ribosomal RNA. This Neisseria gonorrhoeae (strain ATCC 700825 / FA 1090) protein is Small ribosomal subunit protein bS20.